Here is a 276-residue protein sequence, read N- to C-terminus: MKKCINIEKIQKIGLFCRLNTNLNKQIDFLRAIFLQKNIELVLLEQEKINLKDLQELDFLISLGGDGTLLSLCRQAYQAKKPILGINAGNLGFLTALSFNEAESFFKDFFKNDFKIEKAKMLQITLYKKNKIIKKFAFNDAVFSRDNALMANVEVFFENKLFNAYYGDGLIIASSSGSTAYNISAGGPIVHPWSEIFVLTPVCSHSLTQRPIVLPYGFELELKVEHCLLYLDGQEVVDPKEYDKILIGLSKKELSFIHKKNRDYFQVLKEKLNWGK.

Catalysis depends on Asp-66, which acts as the Proton acceptor. Residues 66–67 (DG), 139–140 (ND), Asp-168, 179–184 (TAYNIS), and Gln-234 contribute to the NAD(+) site.

Belongs to the NAD kinase family. It depends on a divalent metal cation as a cofactor.

It localises to the cytoplasm. The enzyme catalyses NAD(+) + ATP = ADP + NADP(+) + H(+). Its function is as follows. Involved in the regulation of the intracellular balance of NAD and NADP, and is a key enzyme in the biosynthesis of NADP. Catalyzes specifically the phosphorylation on 2'-hydroxyl of the adenosine moiety of NAD to yield NADP. This is NAD kinase from Campylobacter lari (strain RM2100 / D67 / ATCC BAA-1060).